The chain runs to 143 residues: 3-dehydroquinate dehydratase (143 aa).

The active-site Proton acceptor is the Tyr22. Substrate is bound by residues Asn73, His79, and Asp86. His99 acts as the Proton donor in catalysis. Residues 100–101 (LS) and Arg110 each bind substrate.

Belongs to the type-II 3-dehydroquinase family. As to quaternary structure, homododecamer.

It carries out the reaction 3-dehydroquinate = 3-dehydroshikimate + H2O. The protein operates within metabolic intermediate biosynthesis; chorismate biosynthesis; chorismate from D-erythrose 4-phosphate and phosphoenolpyruvate: step 3/7. In terms of biological role, catalyzes a trans-dehydration via an enolate intermediate. The polypeptide is 3-dehydroquinate dehydratase (Salinispora tropica (strain ATCC BAA-916 / DSM 44818 / JCM 13857 / NBRC 105044 / CNB-440)).